Reading from the N-terminus, the 628-residue chain is Hemocyanin II (628 aa).

Thr-1 is subject to Blocked amino end (Thr); partial. Residues His-173, His-177, His-204, His-324, His-328, and His-364 each coordinate Cu cation. The N-linked (GlcNAc...) asparagine glycan is linked to Asn-449. 2 disulfide bridges follow: Cys-534–Cys-576 and Cys-536–Cys-583.

The protein belongs to the tyrosinase family. Hemocyanin subfamily. Hexamer or a multiple thereof. In terms of tissue distribution, hemolymph.

It is found in the secreted. It localises to the extracellular space. Hemocyanins are copper-containing oxygen carriers occurring freely dissolved in the hemolymph of many mollusks and arthropods. The polypeptide is Hemocyanin II (Limulus polyphemus (Atlantic horseshoe crab)).